A 667-amino-acid polypeptide reads, in one-letter code: Gamma-tubulin complex component 4 (667 aa).

The segment at 425–445 (HKADATQAREGPSRETSPREA) is disordered.

Belongs to the TUBGCP family. Component of the gamma-tubulin ring complex (gTuRC) consisting of TUBGCP2, TUBGCP3, TUBGCP4, TUBGCP5 and TUBGCP6 and gamma-tubulin TUBG1 or TUBG2. TUBGCP2, TUBGCP3, TUBGCP4, TUBGCP5 and TUBGCP6 assemble in a 5:5:2:1:1 stoichiometry; each is associated with a gamma-tubulin, thereby arranging 14 gamma-tubulins in a helical manner. Gamma-tubulin at the first position is blocked by TUBGCP3 at the last position, allowing 13 protafilaments to grow into a microtubule. The gTuRC (via TUBGCP3 and TUBGCP6) interacts with ACTB and MZT1; the interactions form a luminal bridge that stabilizes the initial structure during complex assembly. The gTuRC (via TUBGCP2) interacts with MZT2A/MZT2B and CDK5RAP2 (via CM1 motif); the interactions play a role in gTuRC activation. Interacts with NINL. Interacts with ATF5; the ATF5:PCNT:polyglutamylated tubulin (PGT) tripartite unites the mother centriole and the pericentriolar material (PCM) in the centrosome. As to expression, ubiquitously expressed.

It is found in the cytoplasm. The protein localises to the cytoskeleton. The protein resides in the microtubule organizing center. It localises to the centrosome. Its function is as follows. Component of the gamma-tubulin ring complex (gTuRC) which mediates microtubule nucleation. The gTuRC regulates the minus-end nucleation of alpha-beta tubulin heterodimers that grow into microtubule protafilaments, a critical step in centrosome duplication and spindle formation. This is Gamma-tubulin complex component 4 (TUBGCP4) from Homo sapiens (Human).